The following is a 460-amino-acid chain: Putative 2,3-dihydroxypropane-1-sulfonate exporter (460 aa).

The Cytoplasmic segment spans residues 1 to 18 (MSQTSSNPATLRLPFKEK). The chain crosses the membrane as a helical span at residues 19-39 (LAYGLGDLGSNILLDIGTLYL). Over 40–46 (LKFYTDV) the chain is Periplasmic. Residues 47-67 (LGLPGTYGGIIFLIAKFFTAF) form a helical membrane-spanning segment. Residues 68 to 91 (TDMGTGIMLDSRRKIGPKGKFRPF) are Cytoplasmic-facing. A helical membrane pass occupies residues 92-112 (VLYAAFPVTLLAIANFVGTPF). At 113 to 122 (EVTGKTVVAT) the chain is on the periplasmic side. Residues 123-143 (MLFMLYGLVFSMMNCSYGAMV) form a helical membrane-spanning segment. At 144 to 161 (PAITKNPDERASLAAWRQ) the chain is on the cytoplasmic side. The chain crosses the membrane as a helical span at residues 162–182 (GGATLGLLLCTVGFVPVMNLI). Topologically, residues 183-190 (EGNAQLSY) are periplasmic. Residues 191–211 (IFAATLFSLFGLLFMWLCYAG) form a helical membrane-spanning segment. Residues 212–242 (VKERYVEVKPVDSAQKPGLLQSFRAIAGNRP) lie on the Cytoplasmic side of the membrane. A helical membrane pass occupies residues 243–263 (LFILCIANLCTLGAFNVKLAI). Over 264-275 (QVYYTQYVLNDP) the chain is Periplasmic. The chain crosses the membrane as a helical span at residues 276-296 (ILLSWMGFFSMGCIFIGVFLM). Topologically, residues 297–307 (PGAVRRFGKKK) are cytoplasmic. The helical transmembrane segment at 308–328 (VYIGGLLIWVAGDLLNYFFGG) threads the bilayer. Position 329 (Gly329) is a topological domain, periplasmic. A helical transmembrane segment spans residues 330 to 350 (SVSFVAFSCLAFFGSAFVNSL). Topologically, residues 351–386 (NWALVSDTVEYGEWRTGVRSEGTVYTGFTFFRKVSQ) are cytoplasmic. The chain crosses the membrane as a helical span at residues 387–407 (ALAGFFPGWMLTQIGYIPNVV). Topologically, residues 408-418 (QSAGTVEGLRQ) are periplasmic. A helical transmembrane segment spans residues 419-439 (LIFIYPCVLAVITIIAMGCFY). At 440-460 (NLNEKMYVRIVEEIEARKHTV) the chain is on the cytoplasmic side.

Belongs to the sodium:galactoside symporter (TC 2.A.2) family.

The protein localises to the cell inner membrane. Functionally, could be involved in the export of 2,3-dihydroxypropane-1-sulfonate (DHPS). The polypeptide is Putative 2,3-dihydroxypropane-1-sulfonate exporter (yihP) (Salmonella typhimurium (strain LT2 / SGSC1412 / ATCC 700720)).